The sequence spans 1091 residues: Sodium/potassium exporting P-type ATPase 2 (1091 aa).

Residues 1–63 (MSEGTVKENN…LGDDTKIDYK (63 aa)) lie on the Cytoplasmic side of the membrane. Residues 64-84 (AMVLHQVCNAMIMVLVISMAI) form a helical membrane-spanning segment. At 85 to 90 (SFAVRD) the chain is on the extracellular side. A helical transmembrane segment spans residues 91 to 111 (WITGGVISFVIAVNVLIGLVQ). At 112 to 282 (EYKATKTMNS…TNVGTPLHRK (171 aa)) the chain is on the cytoplasmic side. The chain crosses the membrane as a helical span at residues 283 to 303 (LSKLAVLLFWIAVLFAIIVMA). The Extracellular segment spans residues 304 to 312 (SQKFDVDKR). The helical transmembrane segment at 313–333 (VAIYAICVALSMIPSSLVVVL) threads the bilayer. Over 334–815 (TITMSVGAAV…RRMTDNIQKF (482 aa)) the chain is Cytoplasmic. Asp-369 functions as the 4-aspartylphosphate intermediate in the catalytic mechanism. 2 residues coordinate Mg(2+): Asp-369 and Thr-371. ATP-binding residues include Thr-371 and Glu-483. Residues 499–525 (ALTGEKSTNQSNENDQSSLSQHNEKPG) form a disordered region. A compositionally biased stretch (polar residues) spans 503-519 (EKSTNQSNENDQSSLSQ). 7 residues coordinate ATP: Lys-561, Arg-606, Thr-673, Gly-674, Asp-675, Arg-732, and Lys-738. Asp-757 contacts Mg(2+). Position 760 (Asn-760) interacts with ATP. A helical transmembrane segment spans residues 816–836 (VLQLLAENVAQALYLIIGLVF). Over 837 to 848 (RDENGKSVFPLS) the chain is Extracellular. A helical membrane pass occupies residues 849 to 869 (PVEVLWIIVVTSCFPAMGLGL). The Cytoplasmic segment spans residues 870–885 (EKAAPDLMDRPPHDSE). The helical transmembrane segment at 886 to 906 (VGIFTWEVIIDTFAYGIIMTG) threads the bilayer. The Extracellular portion of the chain corresponds to 907-943 (SCMASFTGSLYGINSGRLGHDCDGTYNSSCRDVYRSR). Residues 944–964 (SAAFATMTWCALILAWEVVDM) form a helical membrane-spanning segment. Residues 965–991 (RRSFFRMHPDTDSPVKEFFRSIWGNQF) are Cytoplasmic-facing. Residues 992-1012 (LFWSIIFGFVSAFPVVYIPVI) form a helical membrane-spanning segment. Over 1013–1021 (NDKVFLHKP) the chain is Extracellular. The chain crosses the membrane as a helical span at residues 1022-1042 (IGAEWGLAIAFTIAFWIGAEL). Residues 1043-1091 (YKCGKRRYFKTQRAHNPENDLESNNKRDPFEAYSTSTTIHTEVNIGIKQ) are Cytoplasmic-facing.

It belongs to the cation transport ATPase (P-type) (TC 3.A.3) family. Type IID subfamily. Requires Mg(2+) as cofactor. In terms of processing, the active site is phosphorylated in presence of sodium or potassium and in conditions of higher pH. Not phosphorylated in presence of calcium ions.

Its subcellular location is the cell membrane. It catalyses the reaction Na(+)(in) + ATP + H2O = Na(+)(out) + ADP + phosphate + H(+). The catalysed reaction is K(+)(in) + ATP + H2O = K(+)(out) + ADP + phosphate + H(+). Functionally, catalyzes the hydrolysis of ATP coupled with the export of sodium and potassium from the cell. May export potassium less efficiently. May transport other cations such as lithium. Sodium/potassium efflux ATPases are involved in salt tolerance and maintaining the membrane potential across the plasma membrane in high salinity (Na+) or alkaline (K+) environments. This is Sodium/potassium exporting P-type ATPase 2 from Saccharomyces cerevisiae (strain ATCC 204508 / S288c) (Baker's yeast).